A 96-amino-acid chain; its full sequence is MYKDRDVNQRDSRFENQQDGFKKNSNFRFFKRKSCKFCDSGKHPDYKEFDFLKKFITEQGKILPKRITGTSAKHQRRLALEIKRARYMALLPFVKK.

It belongs to the bacterial ribosomal protein bS18 family. In terms of assembly, part of the 30S ribosomal subunit. Forms a tight heterodimer with protein bS6.

Binds as a heterodimer with protein bS6 to the central domain of the 16S rRNA, where it helps stabilize the platform of the 30S subunit. The protein is Small ribosomal subunit protein bS18 of Borreliella afzelii (strain PKo) (Borrelia afzelii).